The primary structure comprises 251 residues: Aliphatic sulfonates import ATP-binding protein SsuB (251 aa).

Positions G19–R238 constitute an ABC transporter domain. G51–S58 serves as a coordination point for ATP.

The protein belongs to the ABC transporter superfamily. Aliphatic sulfonates importer (TC 3.A.1.17.2) family. In terms of assembly, the complex is composed of two ATP-binding proteins (SsuB), two transmembrane proteins (SsuC) and a solute-binding protein (SsuA).

The protein localises to the cell membrane. It carries out the reaction ATP + H2O + aliphatic sulfonate-[sulfonate-binding protein]Side 1 = ADP + phosphate + aliphatic sulfonateSide 2 + [sulfonate-binding protein]Side 1.. Functionally, part of the ABC transporter complex SsuABC involved in aliphatic sulfonates import. Responsible for energy coupling to the transport system. In Mycobacterium avium (strain 104), this protein is Aliphatic sulfonates import ATP-binding protein SsuB.